Consider the following 419-residue polypeptide: Carboxypeptidase A1 (419 aa).

The signal sequence occupies residues 1–16; the sequence is MKRLLILSLLLEAVCG. The propeptide at 17 to 110 is activation peptide; sequence NENFVGHQVL…KQQMSAFQAR (94 aa). One can recognise a Peptidase M14 domain in the interval 121 to 414; the sequence is TYHTLDEIYE…LALLTIMDHT (294 aa). The Zn(2+) site is built by histidine 179 and glutamate 182. Residues 179-182, arginine 237, and 254-255 contribute to the substrate site; these read HSRE and NR. An intrachain disulfide couples cysteine 248 to cysteine 271. Residue histidine 306 coordinates Zn(2+). Residues 307–308 and tyrosine 358 contribute to the substrate site; that span reads SY. Glutamate 380 serves as the catalytic Proton donor/acceptor.

Belongs to the peptidase M14 family. Monomer. May form a complex with proelastase 2. Requires Zn(2+) as cofactor.

The protein resides in the secreted. It catalyses the reaction Release of a C-terminal amino acid, but little or no action with -Asp, -Glu, -Arg, -Lys or -Pro.. The catalysed reaction is leukotriene C4 + H2O = leukotriene F4 + glycine. Its function is as follows. Carboxypeptidase that catalyzes the release of a C-terminal amino acid, but has little or no action with -Asp, -Glu, -Arg, -Lys or -Pro. Catalyzes the conversion of leukotriene C4 to leukotriene F4 via the hydrolysis of an amide bond. The sequence is that of Carboxypeptidase A1 from Rattus norvegicus (Rat).